We begin with the raw amino-acid sequence, 284 residues long: uncharacterized protein (284 aa).

A helical transmembrane segment spans residues 12–32 (ILFILFVVAFCVYLVPRVAIN).

It belongs to the serine esterase family.

The protein localises to the membrane. This is an uncharacterized protein from Escherichia coli O157:H7.